The chain runs to 811 residues: DEP domain-containing protein 1A (811 aa).

The region spanning 24-108 is the DEP domain; the sequence is FRAGMPLRKH…DNNQLFRFPA (85 aa). The Rho-GAP domain maps to 281–321; it reads DYFLDLPEPLLTFEYYELFVNILVVCGYITVSDRSSGIHKI. A Phosphoserine modification is found at S512. The interaction with ZNF224 stretch occupies residues 598–653; sequence AIDALQLCCLLLPPPNRRKLQLLMRMISRMSQNVDMPKLHDAMGTRSLMIHTFSRC.

As to quaternary structure, isoform 2 and isoform 5 can form homodimers and heterodimers. Interacts with ZNF224. Expressed in testis. Up-regulated in bladder cancer cells (at protein level).

The protein localises to the nucleus. Functionally, may be involved in transcriptional regulation as a transcriptional corepressor. The DEPDC1A-ZNF224 complex may play a critical role in bladder carcinogenesis by repressing the transcription of the A20 gene, leading to transport of NF-KB protein into the nucleus, resulting in suppression of apoptosis of bladder cancer cells. The protein is DEP domain-containing protein 1A (DEPDC1) of Homo sapiens (Human).